The following is a 95-amino-acid chain: Co-chaperonin GroES (95 aa).

Belongs to the GroES chaperonin family. In terms of assembly, heptamer of 7 subunits arranged in a ring. Interacts with the chaperonin GroEL.

The protein resides in the cytoplasm. Functionally, together with the chaperonin GroEL, plays an essential role in assisting protein folding. The GroEL-GroES system forms a nano-cage that allows encapsulation of the non-native substrate proteins and provides a physical environment optimized to promote and accelerate protein folding. GroES binds to the apical surface of the GroEL ring, thereby capping the opening of the GroEL channel. In Desulfosudis oleivorans (strain DSM 6200 / JCM 39069 / Hxd3) (Desulfococcus oleovorans), this protein is Co-chaperonin GroES.